Consider the following 201-residue polypeptide: Phosphoheptose isomerase (201 aa).

The 160-residue stretch at 36–195 folds into the SIS domain; that stretch reads IAKSLNEGGK…EDILFEIPAA (160 aa). 51–53 contacts substrate; it reads NGG. The Zn(2+) site is built by His-60 and Glu-64. Residues Glu-64, 93–94, 119–121, Ser-124, and Gln-171 each bind substrate; these read ND and STS. The Zn(2+) site is built by Gln-171 and His-179.

This sequence belongs to the SIS family. GmhA subfamily. It depends on Zn(2+) as a cofactor.

The protein localises to the cytoplasm. It catalyses the reaction 2 D-sedoheptulose 7-phosphate = D-glycero-alpha-D-manno-heptose 7-phosphate + D-glycero-beta-D-manno-heptose 7-phosphate. Its pathway is carbohydrate biosynthesis; D-glycero-D-manno-heptose 7-phosphate biosynthesis; D-glycero-alpha-D-manno-heptose 7-phosphate and D-glycero-beta-D-manno-heptose 7-phosphate from sedoheptulose 7-phosphate: step 1/1. Catalyzes the isomerization of sedoheptulose 7-phosphate in D-glycero-D-manno-heptose 7-phosphate. In Thermodesulfovibrio yellowstonii (strain ATCC 51303 / DSM 11347 / YP87), this protein is Phosphoheptose isomerase.